Here is a 62-residue protein sequence, read N- to C-terminus: Potassium channel toxin kappa-KTx 3.3 (62 aa).

The signal sequence occupies residues 1–26 (MKSTLMTASLLILVLLSIVDYASVYA). Positions 27 to 36 (ELIDSEISME) are excised as a propeptide. Disulfide bonds link Cys-43/Cys-61 and Cys-47/Cys-57.

It belongs to the short scorpion toxin superfamily. Potassium channel inhibitor kappa-KTx family. Kappa-KTx 3 subfamily. Expressed by the venom gland.

The protein resides in the secreted. Functionally, potassium channel inhibitor (Kv). This is Potassium channel toxin kappa-KTx 3.3 from Heterometrus petersii (Asian forest scorpion).